The primary structure comprises 781 residues: Putative amine oxidase [copper-containing] (781 aa).

The signal sequence occupies residues 1–34 (MSLPKTANGMDKLKLCYLLLFYLGSSSLTEVSGA). C199 and C203 are joined by a disulfide. 385 to 395 (FFDSSYMIGMN) is a binding site for substrate. Residue D387 is the Proton acceptor of the active site. Cysteines 405 and 432 form a disulfide. 472–477 (IANYDY) contributes to the substrate binding site. Residue Y475 is the Schiff-base intermediate with substrate; via topaquinone of the active site. 2',4',5'-topaquinone is present on Y475. Residues H525 and H527 each coordinate Cu cation. Ca(2+) contacts are provided by D534, D536, E579, F671, D674, E676, D682, and L683. Mn(2+)-binding residues include D534 and D536. D682 is a binding site for Mn(2+). H693 is a Cu cation binding site.

Belongs to the copper/topaquinone oxidase family. As to quaternary structure, homodimer. Cu cation serves as cofactor. Ca(2+) is required as a cofactor. It depends on L-topaquinone as a cofactor. The cofactor is Mn(2+). Post-translationally, topaquinone (TPQ) is generated by copper-dependent autoxidation of a specific tyrosyl residue. As to expression, prismatic layer of shell (at protein level). Expressed primarily in the mantle with highest level in the mantle edge and lower level in the mantle pallium.

It is found in the secreted. This is Putative amine oxidase [copper-containing] from Margaritifera margaritifera (Freshwater pearl mussel).